We begin with the raw amino-acid sequence, 237 residues long: Undecaprenyl-diphosphatase (237 aa).

Transmembrane regions (helical) follow at residues 38-58 (QTAV…FDGI), 65-85 (WRII…GVLF), 92-112 (LFSS…ILMF), 126-146 (MSFL…FPGI), 166-186 (ALQY…ILGL), 191-211 (VTIL…YVLS), and 217-237 (GKIW…YLVG).

This sequence belongs to the UppP family.

The protein localises to the cell inner membrane. The catalysed reaction is di-trans,octa-cis-undecaprenyl diphosphate + H2O = di-trans,octa-cis-undecaprenyl phosphate + phosphate + H(+). Catalyzes the dephosphorylation of undecaprenyl diphosphate (UPP). Confers resistance to bacitracin. This is Undecaprenyl-diphosphatase from Thermotoga sp. (strain RQ2).